The following is a 415-amino-acid chain: Dynein assembly factor with WD repeat domains 1 (415 aa).

8 WD repeats span residues 90-129 (AHILPLTNVALNKSGSCFITGSYDRTCKLWDTASGEELNT), 132-174 (GHRN…HTFR), 175-214 (GHTAEIVCLSFNPQSTLVATGSMDTTAKLWDIQNGEEVYT), 217-256 (GHSAEIISLSFNTSGDRIITGSFDHTVVVWDADTGRKVNI), 259-298 (GHCAEISSASFNWDCSLILTGSMDKTCKLWDATNGKCVAT), 301-340 (GHDDEILDSCFDYTGKLIATASADGTARIFSAATRKCIAK), 343-384 (GHEG…QVLE), and 386-415 (HTDEIFSCAFNYKGNIVITGSKDNTCRIWR).

The protein belongs to the WD repeat WDR69 family. Interacts with IFT46.

The protein resides in the cytoplasm. The protein localises to the cytoskeleton. Its subcellular location is the flagellum basal body. It is found in the flagellum axoneme. Functionally, required for axonemal dynein assembly and ciliary motility in ciliated organs, including Kupffer's vesicle, during embryogenesis. Facilitates the onset of robust cilia motility during development. The polypeptide is Dynein assembly factor with WD repeat domains 1 (Homo sapiens (Human)).